A 596-amino-acid polypeptide reads, in one-letter code: Elongation factor 4 (596 aa).

The tr-type G domain occupies 2–184; it reads KHIRNFSIIA…VIVAQIPPPE (183 aa). GTP-binding positions include 14–19 and 131–134; these read DHGKST and NKID.

The protein belongs to the TRAFAC class translation factor GTPase superfamily. Classic translation factor GTPase family. LepA subfamily.

It is found in the cell inner membrane. The catalysed reaction is GTP + H2O = GDP + phosphate + H(+). Functionally, required for accurate and efficient protein synthesis under certain stress conditions. May act as a fidelity factor of the translation reaction, by catalyzing a one-codon backward translocation of tRNAs on improperly translocated ribosomes. Back-translocation proceeds from a post-translocation (POST) complex to a pre-translocation (PRE) complex, thus giving elongation factor G a second chance to translocate the tRNAs correctly. Binds to ribosomes in a GTP-dependent manner. This chain is Elongation factor 4, found in Shewanella woodyi (strain ATCC 51908 / MS32).